Here is a 103-residue protein sequence, read N- to C-terminus: MAAVSLSVSTVKPLGDRVFVKVSESEEKTAGGILLPDTAKEKPQVGEVVQVGPGKPNEDGSRQAPEVGIGDKVLYSKYAGTDIKLGSDEYVLLSEKDILAIVN.

Belongs to the GroES chaperonin family. As to quaternary structure, heptamer of 7 subunits arranged in a ring. Interacts with the chaperonin GroEL.

Its subcellular location is the cytoplasm. Together with the chaperonin GroEL, plays an essential role in assisting protein folding. The GroEL-GroES system forms a nano-cage that allows encapsulation of the non-native substrate proteins and provides a physical environment optimized to promote and accelerate protein folding. GroES binds to the apical surface of the GroEL ring, thereby capping the opening of the GroEL channel. In Synechococcus sp. (strain CC9902), this protein is Co-chaperonin GroES.